A 187-amino-acid polypeptide reads, in one-letter code: Elongation factor P (187 aa).

Belongs to the elongation factor P family.

Its subcellular location is the cytoplasm. It participates in protein biosynthesis; polypeptide chain elongation. Functionally, involved in peptide bond synthesis. Stimulates efficient translation and peptide-bond synthesis on native or reconstituted 70S ribosomes in vitro. Probably functions indirectly by altering the affinity of the ribosome for aminoacyl-tRNA, thus increasing their reactivity as acceptors for peptidyl transferase. The polypeptide is Elongation factor P (Helicobacter pylori (strain P12)).